The following is a 196-amino-acid chain: Phosphoheptose isomerase (196 aa).

The SIS domain maps to 34–196 (MVQCLLGGKK…DRTLFPQDEA (163 aa)). 49 to 51 (NGG) is a binding site for substrate. Zn(2+)-binding residues include His58 and Glu62. Residues Glu62, 91–92 (ND), 117–119 (STS), Ser122, and Gln172 contribute to the substrate site. 2 residues coordinate Zn(2+): Gln172 and His180.

Belongs to the SIS family. GmhA subfamily. Homotetramer. The cofactor is Zn(2+).

The protein localises to the cytoplasm. It catalyses the reaction 2 D-sedoheptulose 7-phosphate = D-glycero-alpha-D-manno-heptose 7-phosphate + D-glycero-beta-D-manno-heptose 7-phosphate. It participates in carbohydrate biosynthesis; D-glycero-D-manno-heptose 7-phosphate biosynthesis; D-glycero-alpha-D-manno-heptose 7-phosphate and D-glycero-beta-D-manno-heptose 7-phosphate from sedoheptulose 7-phosphate: step 1/1. Catalyzes the isomerization of sedoheptulose 7-phosphate in D-glycero-D-manno-heptose 7-phosphate. This chain is Phosphoheptose isomerase, found in Shewanella denitrificans (strain OS217 / ATCC BAA-1090 / DSM 15013).